Consider the following 358-residue polypeptide: Putative movement protein (358 aa).

In terms of biological role, transports viral genome to neighboring plant cells directly through plasmosdesmata, without any budding. The movement protein allows efficient cell to cell propagation, by bypassing the host cell wall barrier (Potential). The sequence is that of Putative movement protein from Raspberry bushy dwarf virus (isolate Malling Jewel raspberry/R15) (RBDV).